Here is a 389-residue protein sequence, read N- to C-terminus: Liposome tubulation protein MamY (389 aa).

The Cytoplasmic segment spans residues 1–31 (MAIAAIMGDVLMLMGFNKAAFGKLNSASRAA). Residues 32 to 52 (LIGAVIWAVLSIVYLTIFNGW) form a helical membrane-spanning segment. The Lumenal segment spans residues 53–62 (KNLFTMLPHE). The helical transmembrane segment at 63–83 (FFIVLLSIALPIGLTVLILML) threads the bilayer. At 84–389 (SRIVKSVDTL…TETAPDSGMD (306 aa)) the chain is on the cytoplasmic side.

The protein belongs to the magnetosome MamY family.

It is found in the magnetosome membrane. Causes tubulation when added to magnetosome-derived liposomes, binds liposomes; may be involved in constriction of the cell inner membrane to form mature magnetosomes. Binds preferentially to cardiolipin, a component of bacterial membranes, with very poor to no binding of other tested (phospho)lipids. Addition of cardiolipin to magnetosome-derived lipids increases tubulation. May function with MamX, MamZ amd Mms6. This is Liposome tubulation protein MamY from Paramagnetospirillum magneticum (strain ATCC 700264 / AMB-1) (Magnetospirillum magneticum).